The chain runs to 506 residues: PHD finger protein 10 (506 aa).

Disordered stretches follow at residues 1–66 (MAAV…QDFG) and 293–377 (DPEL…SVSG). Residues 23-35 (VKEDNSNDTKDPE) are compositionally biased toward basic and acidic residues. The segment covering 52–66 (GDSTPSCENSNQDFG) has biased composition (polar residues). Residues 90 to 299 (MLQEQVSEYL…DPLDPELLAL (210 aa)) form an SAY region. Positions 326–338 (SIDSSSMNMSESD) are enriched in low complexity. Positions 353–367 (KVKEKSSTPRKEGSK) are enriched in basic and acidic residues. A PHD-type 1; degenerate zinc finger spans residues 387–444 (ICGICLKGKDANKKGRSERLIHCSQCDNSGHPSCLDMSAELVAVIKKYPWQCMECKTC). The segment at 446 to 489 (ICGQPHHEEEMMFCDTCDRGYHTFCVGLGALPSGRWICDCCQKV) adopts a PHD-type 2; degenerate zinc-finger fold.

The protein belongs to the SAYP family. In terms of assembly, component of neural progenitors-specific chromatin remodeling complex (npBAF complex), a subfamily of ATP-dependent SWI/SNF chromatin remodeling complexes.

It localises to the nucleus. Its function is as follows. Involved in transcription activity regulation by chromatin remodeling in the context of the neural progenitors-specific chromatin remodeling complex (npBAF complex). May play a role in the proliferation of neural progenitors. In Xenopus laevis (African clawed frog), this protein is PHD finger protein 10 (phf10).